The primary structure comprises 142 residues: Hemoglobin subunit pi (142 aa).

Positions 2–142 (TLTQAEKAAV…VSSVLTEKYR (141 aa)) constitute a Globin domain. Heme b contacts are provided by His-59 and His-88.

It belongs to the globin family.

In terms of biological role, the pi' chain is the counterpart of the alpha chain in the major early embryonic hemoglobin P. The protein is Hemoglobin subunit pi of Cairina moschata (Muscovy duck).